The chain runs to 211 residues: Protein-L-isoaspartate O-methyltransferase (211 aa).

Residue Ser62 is part of the active site.

The protein belongs to the methyltransferase superfamily. L-isoaspartyl/D-aspartyl protein methyltransferase family.

The protein resides in the cytoplasm. It catalyses the reaction [protein]-L-isoaspartate + S-adenosyl-L-methionine = [protein]-L-isoaspartate alpha-methyl ester + S-adenosyl-L-homocysteine. In terms of biological role, catalyzes the methyl esterification of L-isoaspartyl residues in peptides and proteins that result from spontaneous decomposition of normal L-aspartyl and L-asparaginyl residues. It plays a role in the repair and/or degradation of damaged proteins. The protein is Protein-L-isoaspartate O-methyltransferase of Shewanella halifaxensis (strain HAW-EB4).